A 396-amino-acid chain; its full sequence is MSKEKFARTKPHCNVGTIGHVDHGKTSLTAAITKVLAEAGGATFQAYDQIDKAPEERARGITISTAHVEYETEARHYAHVDCPGHADYVKNMITGAAQMDGAILVVSAADGPMPQTREHILLARQVGVPALVVFLNKCDMVDDEELLELVELEVRELLTSYDFPGDDIPIVKGSALAALEDSDPKLGHDAILELMKAVDDYIPQPERPKDKPFLMPIEDVFSISGRGTVVTGRVERGIVKVGEEIEIIGIRDTQKTTCTGVEMFRKLLDQGEAGDNIGALLRGTKRDDVERGQVLAKPGSITPHTKFKCEAYILTKEEGGRHTPFFSNYRPQFYFRTTDVTGTIELPEGTEMVMPGDNIGMTVQLIAPIAMDEGLRFAIREGGRTVGAGVVASIVQ.

In terms of domain architecture, tr-type G spans 10–206 (KPHCNVGTIG…AVDDYIPQPE (197 aa)). Positions 19 to 26 (GHVDHGKT) are G1. 19–26 (GHVDHGKT) serves as a coordination point for GTP. T26 is a Mg(2+) binding site. The interval 60–64 (GITIS) is G2. The interval 81-84 (DCPG) is G3. GTP is bound by residues 81–85 (DCPGH) and 136–139 (NKCD). The segment at 136–139 (NKCD) is G4. The G5 stretch occupies residues 174–176 (SAL).

The protein belongs to the TRAFAC class translation factor GTPase superfamily. Classic translation factor GTPase family. EF-Tu/EF-1A subfamily. Monomer.

The protein resides in the cytoplasm. The catalysed reaction is GTP + H2O = GDP + phosphate + H(+). In terms of biological role, GTP hydrolase that promotes the GTP-dependent binding of aminoacyl-tRNA to the A-site of ribosomes during protein biosynthesis. This chain is Elongation factor Tu 1, found in Rhodospirillum rubrum (strain ATCC 11170 / ATH 1.1.1 / DSM 467 / LMG 4362 / NCIMB 8255 / S1).